A 383-amino-acid polypeptide reads, in one-letter code: 2-aminoethylphosphonate--pyruvate transaminase (383 aa).

Position 192 is an N6-(pyridoxal phosphate)lysine (Lys-192).

This sequence belongs to the class-V pyridoxal-phosphate-dependent aminotransferase family. PhnW subfamily. As to quaternary structure, homodimer. Requires pyridoxal 5'-phosphate as cofactor.

The enzyme catalyses (2-aminoethyl)phosphonate + pyruvate = phosphonoacetaldehyde + L-alanine. Involved in phosphonate degradation. This Rhizobium meliloti (strain 1021) (Ensifer meliloti) protein is 2-aminoethylphosphonate--pyruvate transaminase.